Here is a 201-residue protein sequence, read N- to C-terminus: Ras-related protein Ral-a (201 aa).

18–25 serves as a coordination point for GTP; the sequence is GSGGVGKS. Positions 40 to 48 match the Effector region motif; it reads YEPTKADSY. GTP is bound by residues 65–69 and 124–127; these read DTAGQ and NKCD. Cys198 carries the post-translational modification Cysteine methyl ester. A lipid anchor (S-geranylgeranyl cysteine) is attached at Cys198. Positions 199–201 are cleaved as a propeptide — removed in mature form; sequence TLL.

The protein belongs to the small GTPase superfamily. Ras family.

It is found in the cell membrane. The protein localises to the cleavage furrow. The protein resides in the midbody. Its subcellular location is the midbody ring. It carries out the reaction GTP + H2O = GDP + phosphate + H(+). The polypeptide is Ras-related protein Ral-a (Rala) (Drosophila melanogaster (Fruit fly)).